We begin with the raw amino-acid sequence, 472 residues long: Aspartyl/glutamyl-tRNA(Asn/Gln) amidotransferase subunit B (472 aa).

It belongs to the GatB/GatE family. GatB subfamily. Heterotrimer of A, B and C subunits.

It catalyses the reaction L-glutamyl-tRNA(Gln) + L-glutamine + ATP + H2O = L-glutaminyl-tRNA(Gln) + L-glutamate + ADP + phosphate + H(+). The catalysed reaction is L-aspartyl-tRNA(Asn) + L-glutamine + ATP + H2O = L-asparaginyl-tRNA(Asn) + L-glutamate + ADP + phosphate + 2 H(+). In terms of biological role, allows the formation of correctly charged Asn-tRNA(Asn) or Gln-tRNA(Gln) through the transamidation of misacylated Asp-tRNA(Asn) or Glu-tRNA(Gln) in organisms which lack either or both of asparaginyl-tRNA or glutaminyl-tRNA synthetases. The reaction takes place in the presence of glutamine and ATP through an activated phospho-Asp-tRNA(Asn) or phospho-Glu-tRNA(Gln). In Campylobacter jejuni (strain RM1221), this protein is Aspartyl/glutamyl-tRNA(Asn/Gln) amidotransferase subunit B.